Consider the following 145-residue polypeptide: MTLGSGSSVVVPRNFRLLEELERGEKGIGDGTVSYGMDDGDDIYMRSWTGTIIGPHNTVHEGRIYQLKLFCDKDYPEKPPTVRFHSRINMTCVNHDTGVVDSKKFGVLANWQRQYTMEDILTQLKKEMAASHNRKLVQPPEGTFF.

In terms of domain architecture, UBC core spans 12 to 145 (PRNFRLLEEL…LVQPPEGTFF (134 aa)).

It belongs to the ubiquitin-conjugating enzyme family. Heterodimer with UBC35 or UBC36. As to expression, expressed in roots, shoots, leaves, stems and flowers, but not in pollen.

Its function is as follows. Has no ubiquitin ligase activity on its own. The heterodimer with UBC catalyzes the synthesis of non-canonical poly-ubiquitin chains that are linked through 'Lys-63'. This type of poly-ubiquitination does not lead to protein degradation by the proteasome. Mediates transcriptional activation of target genes. May play a role in the control of progress through the cell cycle and differentiation. May play a role in the error-free DNA repair pathway and contributes to the survival of cells after DNA damage. In Arabidopsis thaliana (Mouse-ear cress), this protein is Ubiquitin-conjugating enzyme E2 variant 1C (UEV1C).